The sequence spans 296 residues: Putative peptide transport system permease protein BruAb2_1032 (296 aa).

The next 6 helical transmembrane spans lie at 35–55, 97–117, 131–151, 205–225, 229–249, and 260–280; these read IGLVLLLIVVLAAVLAPWITN, LWIGLTVAVLSAILGAIIGIA, VMDALMAFPAILLAIGISAAL, ILPNCLAPLLVTLTFVFAYAI, ATLSFLGIGTPPPHASWGSIV, and WWIMLFPGIAITISALAINLI. One can recognise an ABC transmembrane type-1 domain in the interval 97–281; sequence LWIGLTVAVL…ISALAINLIG (185 aa).

The protein belongs to the binding-protein-dependent transport system permease family. In terms of assembly, the complex is composed of two ATP-binding proteins (BruAb2_1033 and BruAb2_1034), two transmembrane proteins (BruAb2_1031 and BruAb2_1032) and a solute-binding protein (BruAb2_1030).

It localises to the cell inner membrane. Functionally, probably part of an ABC transporter complex that could be involved in peptide import. Probably responsible for the translocation of the substrate across the membrane. The chain is Putative peptide transport system permease protein BruAb2_1032 from Brucella abortus biovar 1 (strain 9-941).